Consider the following 183-residue polypeptide: Probable chemoreceptor glutamine deamidase CheD (183 aa).

The protein belongs to the CheD family.

The catalysed reaction is L-glutaminyl-[protein] + H2O = L-glutamyl-[protein] + NH4(+). Functionally, probably deamidates glutamine residues to glutamate on methyl-accepting chemotaxis receptors (MCPs), playing an important role in chemotaxis. The polypeptide is Probable chemoreceptor glutamine deamidase CheD (Rhizobium meliloti (strain 1021) (Ensifer meliloti)).